Consider the following 1129-residue polypeptide: Phospholipid-transporting ATPase 11C (1129 aa).

The Cytoplasmic segment spans residues 1–83; the sequence is MFRRTLNRLC…IIFLVQVTVD (83 aa). A helical membrane pass occupies residues 84–104; it reads TPTSPVTSGLPLFFVITVTAI. At 105–287 the chain is on the extracellular side; sequence KQGYEDWLRH…SQKCSAVEKS (183 aa). A helical membrane pass occupies residues 288 to 308; it reads INAFLIVYLFILLTKAAVCTT. Residues 309 to 343 lie on the Cytoplasmic side of the membrane; it reads LKYVWQSSPYNDEPWYNQKTQKERETFQVLKMFTD. Residues 344-364 traverse the membrane as a helical segment; sequence FLSFMVLFNFIIPVSMYVTVE. The Extracellular portion of the chain corresponds to 365–876; sequence MQKFLGSFFI…YVRIAHLVQY (512 aa). The active-site 4-aspartylphosphate intermediate is D409. ATP is bound by residues D409, K410, and T411. D409 contributes to the Mg(2+) binding site. A Mg(2+)-binding site is contributed by T411. Position 442 is a phosphoserine (S442). Residues E498, F540, K563, and R594 each contribute to the ATP site. A coiled-coil region spans residues 607 to 643; sequence DFERINAQLVEAKMALQDREEKLEKVFDEIETNMNLI. T674, G675, and D676 together coordinate ATP. A coiled-coil region spans residues 695 to 726; the sequence is TELLELTTKTIEESERKEDRLHELLIEYRKKL. ATP-binding residues include R789 and K795. D816 is a Mg(2+) binding site. Residues N819 and D820 each contribute to the ATP site. D820 provides a ligand contact to Mg(2+). The helical transmembrane segment at 877 to 897 threads the bilayer; the sequence is FFYKNLCFILPQFLYQFFCGF. The Cytoplasmic portion of the chain corresponds to 898–905; sequence SQQPLYDA. Residues 906–926 form a helical membrane-spanning segment; that stretch reads AYLTMYNICFTSLPILAYSLL. At 927 to 952 the chain is on the extracellular side; the sequence is EQHINIDTLTADPRLYMKITGNAMLQ. A helical transmembrane segment spans residues 953 to 973; the sequence is LGPFLHWTFLAAFEGTVFFFG. The Cytoplasmic portion of the chain corresponds to 974–988; sequence TYFLFQTSSLEDNGK. The chain crosses the membrane as a helical span at residues 989-1009; sequence IYGNWTFGTIVFTVLVFTVTL. At 1010–1023 the chain is on the extracellular side; it reads KLALDTRFWTWINH. The chain crosses the membrane as a helical span at residues 1024-1044; sequence FVIWGSLAFYVFFSFFWGGII. At 1045–1066 the chain is on the cytoplasmic side; the sequence is WPFLKQQRMYFVFAQMLCSVST. A helical transmembrane segment spans residues 1067 to 1087; sequence WLAIILLIFISLFPEILLIVV. Topologically, residues 1088–1129 are extracellular; sequence KNVRRRSARRNLSCRRASDSLSARPSVRPLLLRTFSDESNIL. Phosphoserine occurs at positions 1105, 1113, and 1123. The Di-leucine motif signature appears at 1113 to 1118; that stretch reads SVRPLL.

Belongs to the cation transport ATPase (P-type) (TC 3.A.3) family. Type IV subfamily. Component of a P4-ATPase flippase complex which consists of a catalytic alpha subunit ATP11C and an accessory beta subunit TMEM30A. Requires Mg(2+) as cofactor. Post-translationally, proteolytically cleaved by CASP3, CASP6 and CASP7. Phosphorylated at Ser-1113 likely by PRKCA; this creates a functional di-leucine motif that is sufficient for endocytosis. In terms of tissue distribution, widely expressed. Expressed in retina, brain, liver and testes (at protein level). Expressed in lung, bone marrow, lymph nodes, prostate, ovary and uterus. Expressed in fetus.

The protein resides in the cell membrane. It is found in the endoplasmic reticulum membrane. It localises to the early endosome membrane. Its subcellular location is the recycling endosome membrane. It carries out the reaction ATP + H2O + phospholipidSide 1 = ADP + phosphate + phospholipidSide 2.. It catalyses the reaction a 1,2-diacyl-sn-glycero-3-phospho-L-serine(out) + ATP + H2O = a 1,2-diacyl-sn-glycero-3-phospho-L-serine(in) + ADP + phosphate + H(+). The catalysed reaction is a 1,2-diacyl-sn-glycero-3-phosphoethanolamine(out) + ATP + H2O = a 1,2-diacyl-sn-glycero-3-phosphoethanolamine(in) + ADP + phosphate + H(+). Functionally, catalytic component of a P4-ATPase flippase complex which catalyzes the hydrolysis of ATP coupled to the transport of aminophospholipids, phosphatidylserines (PS) and phosphatidylethanolamines (PE), from the outer to the inner leaflet of the plasma membrane. Major PS-flippase in immune cell subsets. In erythrocyte plasma membrane, it is required to maintain PS in the inner leaflet preventing its exposure on the surface. This asymmetric distribution is critical for the survival of erythrocytes in circulation since externalized PS is a phagocytic signal for erythrocyte clearance by splenic macrophages. Required for B cell differentiation past the pro-B cell stage. Seems to mediate PS flipping in pro-B cells. May be involved in the transport of cholestatic bile acids. The polypeptide is Phospholipid-transporting ATPase 11C (Mus musculus (Mouse)).